A 72-amino-acid polypeptide reads, in one-letter code: Cytotoxin 9 (72 aa).

The signal sequence occupies residues 1–12 (VVTIVCLDLGYT). 4 cysteine pairs are disulfide-bonded: Cys-15–Cys-33, Cys-26–Cys-50, Cys-54–Cys-65, and Cys-66–Cys-71.

It belongs to the three-finger toxin family. Short-chain subfamily. Type IA cytotoxin sub-subfamily. In terms of assembly, monomer in solution; Homodimer and oligomer in the presence of negatively charged lipids forming a pore with a size ranging between 20 and 30 Angstroms. As to expression, expressed by the venom gland.

It is found in the secreted. Its function is as follows. Shows cytolytic activity on many different cells by forming a pore in lipid membranes. In vivo, increases heart rate or kills the animal by cardiac arrest. In addition, it binds to heparin with high affinity, interacts with Kv channel-interacting protein 1 (KCNIP1) in a calcium-independent manner, and binds to integrin alpha-V/beta-3 (ITGAV/ITGB3) with moderate affinity. Preferentially binds acidic phospholipids like phosphatidylserine, phosphatidic acid and phosphatidyl glycerol. Has hemolytic activity towards human erythrocytes (EC(50)=0.171 uM) and cytolytic activity towards various cell lines. This Naja naja (Indian cobra) protein is Cytotoxin 9.